The primary structure comprises 829 residues: Pre-mRNA-splicing factor syf1 (829 aa).

HAT repeat units follow at residues 15 to 47 (SLVS…YKLQ), 49 to 81 (GTVQ…FRTK), 93 to 125 (SEYQ…FLMQ), 127 to 161 (PLVT…FANS), 163 to 182 (EGET…PEDA), 277 to 312 (GSFE…FEES), 380 to 418 (DNKE…FYEA), 420 to 456 (GDLS…MELR), 473 to 505 (APKR…YVDL), 544 to 578 (KYFE…KAVD), 581 to 615 (ISIE…LEEE), and 689 to 723 (GEID…FEVQ). A disordered region spans residues 799–829 (AASEGPKGGSMPVQPVEVHNPDAIDLDEMDE).

This sequence belongs to the crooked-neck family. In terms of assembly, associated with the spliceosome.

The protein resides in the nucleus. Its function is as follows. Involved in pre-mRNA splicing and cell cycle progression. The polypeptide is Pre-mRNA-splicing factor syf1 (msp-41) (Neurospora crassa (strain ATCC 24698 / 74-OR23-1A / CBS 708.71 / DSM 1257 / FGSC 987)).